The sequence spans 542 residues: Chaperonin GroEL 2 (542 aa).

ATP is bound by residues 30-33, Lys-51, 87-91, Gly-415, and Asp-496; these read TLGP and DGTTT.

Belongs to the chaperonin (HSP60) family. In terms of assembly, forms a cylinder of 14 subunits composed of two heptameric rings stacked back-to-back. Interacts with the co-chaperonin GroES.

It is found in the cytoplasm. The catalysed reaction is ATP + H2O + a folded polypeptide = ADP + phosphate + an unfolded polypeptide.. Functionally, together with its co-chaperonin GroES, plays an essential role in assisting protein folding. The GroEL-GroES system forms a nano-cage that allows encapsulation of the non-native substrate proteins and provides a physical environment optimized to promote and accelerate protein folding. This chain is Chaperonin GroEL 2, found in Sinorhizobium fredii (strain NBRC 101917 / NGR234).